Here is a 600-residue protein sequence, read N- to C-terminus: Probable translation initiation factor IF-2 (600 aa).

Residues 10–227 (LRQPIVVVLG…LLAGLTQRYL (218 aa)) enclose the tr-type G domain. The segment at 19-26 (GHVDHGKT) is G1. GTP is bound at residue 19-26 (GHVDHGKT). Residues 44 to 48 (EMTQE) are G2. The interval 83–86 (DTPG) is G3. Residues 83–87 (DTPGH) and 137–140 (NKID) contribute to the GTP site. The tract at residues 137–140 (NKID) is G4. The segment at 205–207 (SAK) is G5.

The protein belongs to the TRAFAC class translation factor GTPase superfamily. Classic translation factor GTPase family. IF-2 subfamily.

Functionally, function in general translation initiation by promoting the binding of the formylmethionine-tRNA to ribosomes. Seems to function along with eIF-2. This is Probable translation initiation factor IF-2 from Saccharolobus solfataricus (strain ATCC 35092 / DSM 1617 / JCM 11322 / P2) (Sulfolobus solfataricus).